The following is a 166-amino-acid chain: Endoribonuclease YbeY (166 aa).

Zn(2+)-binding residues include His-126, His-130, and His-136.

The protein belongs to the endoribonuclease YbeY family. Zn(2+) serves as cofactor.

Its subcellular location is the cytoplasm. Functionally, single strand-specific metallo-endoribonuclease involved in late-stage 70S ribosome quality control and in maturation of the 3' terminus of the 16S rRNA. The chain is Endoribonuclease YbeY from Laribacter hongkongensis (strain HLHK9).